A 491-amino-acid chain; its full sequence is NADPH:adrenodoxin oxidoreductase, mitochondrial (491 aa).

Residues 1 to 32 constitute a mitochondrion transit peptide; it reads MASRCWRWWGWSAWPRTRLPPAGSTPSFCHHF. Positions 49, 69, 77, and 113 each coordinate FAD. NADP(+) is bound by residues 184–187, 228–229, and Glu240; these read QGNV and RR. Residues Ser310 and Ser317 each carry the phosphoserine modification. FAD-binding positions include Trp398 and 405 to 407; that span reads GVI. Gly405 is an NADP(+) binding site.

This sequence belongs to the ferredoxin--NADP reductase type 1 family. Monomer. Interacts directly with FDX1. The cofactor is FAD.

The protein localises to the mitochondrion. It is found in the mitochondrion inner membrane. The catalysed reaction is 2 reduced [adrenodoxin] + NADP(+) + H(+) = 2 oxidized [adrenodoxin] + NADPH. The enzyme catalyses 2 reduced [2Fe-2S]-[ferredoxin] + NADP(+) + H(+) = 2 oxidized [2Fe-2S]-[ferredoxin] + NADPH. The protein operates within steroid metabolism; cholesterol metabolism. Its function is as follows. Serves as the first electron transfer protein in all the mitochondrial P450 systems including cholesterol side chain cleavage in all steroidogenic tissues, steroid 11-beta hydroxylation in the adrenal cortex, 25-OH-vitamin D3-24 hydroxylation in the kidney, and sterol C-27 hydroxylation in the liver. Also acts as a ferredoxin--NADP(+) reductase essential for coenzyme Q biosynthesis: together with FDX2, transfers the electrons required for the hydroxylation reaction performed by COQ6. This Homo sapiens (Human) protein is NADPH:adrenodoxin oxidoreductase, mitochondrial.